The following is a 217-amino-acid chain: Biotin transport regulator (217 aa).

The interval 14 to 49 (GDGLGNLAGRSADPTGAADKGESGVPVPPTGFVDPT) is disordered.

In terms of biological role, may be part of a system that R.meliloti uses to respond to plant (alfalfa) biotin signals. The sequence is that of Biotin transport regulator (bioS) from Rhizobium meliloti (strain 1021) (Ensifer meliloti).